Here is a 412-residue protein sequence, read N- to C-terminus: Acetylornithine aminotransferase (412 aa).

Residues 109–110 (GA) and Phe142 each bind pyridoxal 5'-phosphate. Arg145 provides a ligand contact to N(2)-acetyl-L-ornithine. 233–236 (DEVQ) serves as a coordination point for pyridoxal 5'-phosphate. At Lys262 the chain carries N6-(pyridoxal phosphate)lysine. Ser289 contributes to the N(2)-acetyl-L-ornithine binding site. Thr290 serves as a coordination point for pyridoxal 5'-phosphate.

Belongs to the class-III pyridoxal-phosphate-dependent aminotransferase family. ArgD subfamily. As to quaternary structure, homodimer. It depends on pyridoxal 5'-phosphate as a cofactor.

It is found in the cytoplasm. It carries out the reaction N(2)-acetyl-L-ornithine + 2-oxoglutarate = N-acetyl-L-glutamate 5-semialdehyde + L-glutamate. It functions in the pathway amino-acid biosynthesis; L-arginine biosynthesis; N(2)-acetyl-L-ornithine from L-glutamate: step 4/4. The polypeptide is Acetylornithine aminotransferase (Thermosynechococcus vestitus (strain NIES-2133 / IAM M-273 / BP-1)).